A 278-amino-acid polypeptide reads, in one-letter code: Elongation factor Ts (278 aa).

The interval 80 to 83 is involved in Mg(2+) ion dislocation from EF-Tu; it reads TDFV.

Belongs to the EF-Ts family.

It localises to the cytoplasm. Functionally, associates with the EF-Tu.GDP complex and induces the exchange of GDP to GTP. It remains bound to the aminoacyl-tRNA.EF-Tu.GTP complex up to the GTP hydrolysis stage on the ribosome. This chain is Elongation factor Ts, found in Micrococcus luteus (strain ATCC 4698 / DSM 20030 / JCM 1464 / CCM 169 / CCUG 5858 / IAM 1056 / NBRC 3333 / NCIMB 9278 / NCTC 2665 / VKM Ac-2230) (Micrococcus lysodeikticus).